The following is a 299-amino-acid chain: CRISPR system Cms protein Csm4 (299 aa).

This sequence belongs to the CRISPR-associated Csm4 family. In terms of assembly, part of the Csm effector complex that includes at least Cas10(1), Csm2(3), Csm3(5), Csm4(1), Csm5(1) and mature crRNA. The Csm complex is elongated and slightly twisted with a maximal length of 215 Angstroms and a diameter of 75-80 Angstroms. It has been modeled to have a central protein filamant of Csm3 subunits along which the dsRNA helix of paired crRNA and target RNA binds. The filament is capped at one end by Cas10 and Csm4 and at the other end by Csm5; ssDNA is thought to bind to the N-terminal HD domain of Cas10. Csm with a precursor crRNA does not include Csm5, while Cas6, the enzyme probably involved in pre-crRNA processing, is found associated with a subset of the Csm complex.

Its function is as follows. CRISPR (clustered regularly interspaced short palindromic repeat) is an adaptive immune system that provides protection against mobile genetic elements (viruses, transposable elements and conjugative plasmids). CRISPR clusters contain spacers, sequences complementary to antecedent mobile elements, and target invading nucleic acids. CRISPR clusters are transcribed and processed into CRISPR RNA (crRNA). The type III-A Csm effector complex binds crRNA and acts as a crRNA-guided RNase, DNase and cyclic oligoadenylate synthase; binding of target RNA cognate to the crRNA is required for all activities. In a heterologous host this Csm effector complex restricts ssRNA phage MS2, suggesting it may target RNA viruses in vivo. Csm functions as a non-specific ssDNase. Base-pairing between crRNA and target RNA to form a ternary Csm complex activates a ssDNase activity; target RNA cleavage suppresses the ssDNase, a temporal control that prevents uncontrolled DNA degradation. Viral RNA transcripts probably tether the Csm complex to the viral genome, recruiting Cas10 ssDNA activity which is able to degrade DNA in the transcription bubble, spatially controlling the DNase activity. Functionally, the subunit probably binds to the 5' handle of the crRNA, helping in discrimination between self- and non-self. This Streptococcus thermophilus protein is CRISPR system Cms protein Csm4.